The chain runs to 276 residues: Ribosomal RNA small subunit methyltransferase A (276 aa).

S-adenosyl-L-methionine contacts are provided by N15, L17, G42, E63, D88, and N111.

This sequence belongs to the class I-like SAM-binding methyltransferase superfamily. rRNA adenine N(6)-methyltransferase family. RsmA subfamily.

It localises to the cytoplasm. The enzyme catalyses adenosine(1518)/adenosine(1519) in 16S rRNA + 4 S-adenosyl-L-methionine = N(6)-dimethyladenosine(1518)/N(6)-dimethyladenosine(1519) in 16S rRNA + 4 S-adenosyl-L-homocysteine + 4 H(+). Its function is as follows. Specifically dimethylates two adjacent adenosines (A1518 and A1519) in the loop of a conserved hairpin near the 3'-end of 16S rRNA in the 30S particle. May play a critical role in biogenesis of 30S subunits. The sequence is that of Ribosomal RNA small subunit methyltransferase A from Geobacter sulfurreducens (strain ATCC 51573 / DSM 12127 / PCA).